The primary structure comprises 183 residues: dCTP deaminase (183 aa).

DCTP is bound at residue 106–111; it reads KSTYAR. Glutamate 132 (proton donor/acceptor) is an active-site residue. Glutamine 151, tyrosine 165, and glutamine 175 together coordinate dCTP.

Belongs to the dCTP deaminase family. As to quaternary structure, homotrimer.

It catalyses the reaction dCTP + H2O + H(+) = dUTP + NH4(+). It participates in pyrimidine metabolism; dUMP biosynthesis; dUMP from dCTP (dUTP route): step 1/2. Functionally, catalyzes the deamination of dCTP to dUTP. This is dCTP deaminase from Gluconobacter oxydans (strain 621H) (Gluconobacter suboxydans).